The chain runs to 310 residues: Phosphoribosylaminoimidazole-succinocarboxamide synthase (310 aa).

Belongs to the SAICAR synthetase family.

It catalyses the reaction 5-amino-1-(5-phospho-D-ribosyl)imidazole-4-carboxylate + L-aspartate + ATP = (2S)-2-[5-amino-1-(5-phospho-beta-D-ribosyl)imidazole-4-carboxamido]succinate + ADP + phosphate + 2 H(+). It participates in purine metabolism; IMP biosynthesis via de novo pathway; 5-amino-1-(5-phospho-D-ribosyl)imidazole-4-carboxamide from 5-amino-1-(5-phospho-D-ribosyl)imidazole-4-carboxylate: step 1/2. The chain is Phosphoribosylaminoimidazole-succinocarboxamide synthase from Xanthomonas campestris pv. campestris (strain B100).